The following is a 355-amino-acid chain: Chromosomal protein D1 (355 aa).

At Met-1 the chain carries N-acetylmethionine. Residues 1 to 355 (MEEVAVKKRG…NYNDSESVAA (355 aa)) are disordered. Positions 7–14 (KKRGRPSK) form a DNA-binding region, a.T hook 1. Ser-30 is modified (phosphoserine). DNA-binding regions (a.T hook) lie at residues 34 to 41 (KKRGRPAK) and 60 to 67 (KIQNDEDP). A compositionally biased stretch (acidic residues) spans 64-77 (DEDPEDEGEEDGDG). Ser-80, Ser-88, and Ser-89 each carry phosphoserine. The segment at residues 94 to 101 (KGRGRPKS) is a DNA-binding region (a.T hook 4). Residues Ser-107, Ser-109, and Ser-112 each carry the phosphoserine modification. Phosphothreonine is present on Thr-115. Ser-118 carries the phosphoserine modification. A compositionally biased stretch (basic residues) spans 119–130 (AKKRKAGRPKKH). Residues 122 to 129 (RKAGRPKK) constitute a DNA-binding region (a.T hook 5). A phosphoserine; by CK2 mark is found at Ser-133 and Ser-135. The span at 135–147 (SENEDDQDEDDDG) shows a compositional bias: acidic residues. 5 positions are modified to phosphoserine: Ser-149, Ser-150, Ser-161, Ser-164, and Ser-170. The segment at residues 155–162 (RPVGRPSA) is a DNA-binding region (a.T hook 6). Positions 174–181 (RGLGRPKK) form a DNA-binding region, a.T hook 7. Residue Ser-186 is modified to Phosphoserine; by CK2. Positions 196–203 (KKRGRPPQ) form a DNA-binding region, a.T hook 8. Ser-208 carries the post-translational modification Phosphoserine. The a.T hook 9 DNA-binding region spans 219–226 (RPRGRPKA). Residues 237–247 (NDDDQDDENSG) are compositionally biased toward acidic residues. Ser-246, Ser-252, and Ser-253 each carry phosphoserine. DNA-binding regions (a.T hook) lie at residues 262–269 (KKRGRPSL) and 281–288 (KPRSRPAK). Phosphoserine occurs at positions 299 and 307. Residues 307 to 318 (SKKESNDEDRAV) are compositionally biased toward basic and acidic residues. Ser-311 carries the post-translational modification Phosphoserine; by CK2. Thr-321 is subject to Phosphothreonine. Residue Ser-332 is modified to Phosphoserine; by CK2. Residues 345-355 (DNYNDSESVAA) show a composition bias toward polar residues.

Its subcellular location is the nucleus. It localises to the chromosome. This satellite DNA-associated protein is a double-stranded DNA binding protein specific for tracts of pure at DNA. It may play a role in organizing the higher-order structure of euchromatin as well as heterochromatin. This Drosophila melanogaster (Fruit fly) protein is Chromosomal protein D1 (D1).